The primary structure comprises 757 residues: Polyribonucleotide nucleotidyltransferase (757 aa).

Residues Asp-482 and Asp-488 each coordinate Mg(2+). The 60-residue stretch at 549 to 608 (PRMLSFYIDKDKISAAIGSKGKNIRSVCERSNAKIEIGDDGKVSVFATSGTEAEIAKSMM) folds into the KH domain. One can recognise an S1 motif domain in the interval 618-686 (GSIVDVKVVR…KGGCPKLSRR (69 aa)). The segment covering 703 to 714 (EERKDGPNDRDN) has biased composition (basic and acidic residues). The disordered stretch occupies residues 703-757 (EERKDGPNDRDNYYNNSFSRKPGGSHHKRPPRPRSGFSNRNRPKFGNNDSSSGFY). The segment covering 725-734 (GGSHHKRPPR) has biased composition (basic residues).

It belongs to the polyribonucleotide nucleotidyltransferase family. It depends on Mg(2+) as a cofactor.

Its subcellular location is the cytoplasm. It carries out the reaction RNA(n+1) + phosphate = RNA(n) + a ribonucleoside 5'-diphosphate. Involved in mRNA degradation. Catalyzes the phosphorolysis of single-stranded polyribonucleotides processively in the 3'- to 5'-direction. This chain is Polyribonucleotide nucleotidyltransferase, found in Wolbachia sp. subsp. Drosophila simulans (strain wRi).